The chain runs to 403 residues: Acetyl-CoA acetyltransferase IA (403 aa).

Cys-91 (acyl-thioester intermediate) is an active-site residue. Catalysis depends on proton acceptor residues His-353 and Cys-383. The short motif at 401–403 (AKL) is the Microbody targeting signal element.

Belongs to the thiolase-like superfamily. Thiolase family. As to quaternary structure, multimeric.

The protein resides in the peroxisome. It carries out the reaction 2 acetyl-CoA = acetoacetyl-CoA + CoA. It participates in metabolic intermediate biosynthesis; (R)-mevalonate biosynthesis; (R)-mevalonate from acetyl-CoA: step 1/3. This is Acetyl-CoA acetyltransferase IA (PACTA) from Candida tropicalis (Yeast).